Reading from the N-terminus, the 321-residue chain is Probable E3 ubiquitin-protein ligase BAH1-like 1 (321 aa).

The SPX domain occupies Met1 to Ala149. The RING-type zinc finger occupies Cys217–Arg266.

Belongs to the RING-type zinc finger family.

The enzyme catalyses S-ubiquitinyl-[E2 ubiquitin-conjugating enzyme]-L-cysteine + [acceptor protein]-L-lysine = [E2 ubiquitin-conjugating enzyme]-L-cysteine + N(6)-ubiquitinyl-[acceptor protein]-L-lysine.. It functions in the pathway protein modification; protein ubiquitination. This is Probable E3 ubiquitin-protein ligase BAH1-like 1 from Oryza sativa subsp. indica (Rice).